A 639-amino-acid chain; its full sequence is Chaperone protein HtpG (639 aa).

Residues 1 to 347 (MSHQETHGFQ…SNDLPLNVSR (347 aa)) form an a; substrate-binding region. The tract at residues 348 to 564 (EILQDNKITT…AGEMSSQMIK (217 aa)) is b. The interval 565-639 (LMQAAGQAVT…MNKMLLASVK (75 aa)) is c.

This sequence belongs to the heat shock protein 90 family. In terms of assembly, homodimer.

The protein localises to the cytoplasm. Its function is as follows. Molecular chaperone. Has ATPase activity. The chain is Chaperone protein HtpG from Shewanella loihica (strain ATCC BAA-1088 / PV-4).